The following is a 273-amino-acid chain: Type II iodothyronine deiodinase (273 aa).

Residues 1-9 (MGILSVDLL) are Lumenal-facing. A helical; Signal-anchor for type III membrane protein transmembrane segment spans residues 10–34 (ITLQILPVFFSNCLFLALYDSVILL). At 35–273 (KHVVLLLSRS…KRUKKTRLAG (239 aa)) the chain is on the cytoplasmic side. Sec133 is a catalytic residue. 2 non-standard amino acids (selenocysteine) are found at residues Sec133 and Sec266.

The protein belongs to the iodothyronine deiodinase family. As to quaternary structure, predominantly monomer. Can form homodimers but homodimerization is not essential for enzyme activity. Interacts with USP20 and USP33. Interacts with MARCHF6. In terms of processing, ubiquitinated by MARCHF6, leading to its degradation by the proteasome. Deubiquitinated by USP20 and USP33. Isoform 1 is expressed in the lung, trachea, kidney, heart, skeletal muscle, placenta, fetal brain and several regions of the adult brain. Isoform 2 is expressed in the brain, heart, kidney and trachea.

Its subcellular location is the endoplasmic reticulum membrane. The enzyme catalyses 3,3',5-triiodo-L-thyronine + iodide + A + H(+) = L-thyroxine + AH2. It catalyses the reaction 3,3'-diiodo-L-thyronine + iodide + A + H(+) = 3,3',5'-triiodo-L-thyronine + AH2. The catalysed reaction is 3'-iodo-L-thyronine + iodide + A + H(+) = 3',5'-diiodo-L-thyronine + AH2. It carries out the reaction 3,3'-diiodothyronamine + iodide + A + H(+) = 3,3',5'-triiodothyronamine + AH2. The enzyme catalyses 3'-iodothyronamine + iodide + A + H(+) = 3',5'-diiodothyronamine + AH2. Functionally, plays a crucial role in the metabolism of thyroid hormones (TH) and has specific roles in TH activation and inactivation by deiodination. Catalyzes the deiodination of L-thyroxine (T4) to 3,5,3'-triiodothyronine (T3), 3,3',5'-triiodothyronine (rT3) to 3,3'-diiodothyronine (3,3'-T2) and 3',5'-diiodothyronine (3',5'-T2) to 3'-monoiodothyronine (3'-T1) via outer-ring deiodination (ORD). Catalyzes the phenolic ring deiodinations of 3,3',5'-triiodothyronamine and 3',5'- diiodothyronamine. The sequence is that of Type II iodothyronine deiodinase (DIO2) from Homo sapiens (Human).